Here is a 401-residue protein sequence, read N- to C-terminus: MQKRLTLLGSTGSIGDSTLDVVARHPDRFFVYALTAHRNGDKLVEQCLRFQPEVAVVGDADTAAKVAAKLRAAGCKTAVAYGPQALVDVSKSDGCDTVVAAIVGAAGLEPSLAAARAGKRILLANKEALVMSGSIFMDAVHDNGAILLPVDSEHNAIFQCLPRESALHGGVSKIILTASGGPFRTREPASLVDVTPDEACKHPNWVMGRKISVDSATMMNKGLEVIEAHWLFNLPGDRIDVLIHPQSVIHSLVSYADGSVLAQLGNPDMRTPIAHALAFPDRVDSGVGQLDLAQIAQLSFEKPDYTRFPCLALAMKALAEGGVASAALNAANEIAVEAFLTRRIGFMAIAQVVDAVLNSLPNREATSLADVVDADAAARRAAHAYIDGLPAGARLTERAVQ.

NADPH contacts are provided by Thr-11, Gly-12, Ser-13, Ile-14, Arg-38, Asn-39, and Asn-125. Lys-126 contacts 1-deoxy-D-xylulose 5-phosphate. Position 127 (Glu-127) interacts with NADPH. Asp-151 provides a ligand contact to Mn(2+). Residues Ser-152, Glu-153, Ser-179, and His-202 each coordinate 1-deoxy-D-xylulose 5-phosphate. Glu-153 is a binding site for Mn(2+). Residue Gly-208 coordinates NADPH. 4 residues coordinate 1-deoxy-D-xylulose 5-phosphate: Ser-215, Asn-220, Lys-221, and Glu-224. Residue Glu-224 coordinates Mn(2+).

It belongs to the DXR family. It depends on Mg(2+) as a cofactor. Mn(2+) is required as a cofactor.

It catalyses the reaction 2-C-methyl-D-erythritol 4-phosphate + NADP(+) = 1-deoxy-D-xylulose 5-phosphate + NADPH + H(+). It functions in the pathway isoprenoid biosynthesis; isopentenyl diphosphate biosynthesis via DXP pathway; isopentenyl diphosphate from 1-deoxy-D-xylulose 5-phosphate: step 1/6. In terms of biological role, catalyzes the NADPH-dependent rearrangement and reduction of 1-deoxy-D-xylulose-5-phosphate (DXP) to 2-C-methyl-D-erythritol 4-phosphate (MEP). The protein is 1-deoxy-D-xylulose 5-phosphate reductoisomerase of Paraburkholderia phymatum (strain DSM 17167 / CIP 108236 / LMG 21445 / STM815) (Burkholderia phymatum).